The following is a 605-amino-acid chain: Glucose oxidase (605 aa).

The first 18 residues, 1-18, serve as a signal peptide directing secretion; sequence MVSVFLSTLLLAAATVQA. Residues Leu52, Thr53, and Glu73 each coordinate FAD. N-linked (GlcNAc...) asparagine glycosylation occurs at Asn111. Ser125, Asn129, Gly130, and Ser132 together coordinate FAD. N-linked (GlcNAc...) asparagine glycans are attached at residues Asn183 and Asn190. Cys186 and Cys228 are oxidised to a cystine. Residue Val272 coordinates FAD. Asn335, Asn375, Asn410, and Asn519 each carry an N-linked (GlcNAc...) asparagine glycan. His538 (proton acceptor) is an active-site residue. Lys559 and Val560 together coordinate O2. The FAD site is built by Gly571 and Met583.

It belongs to the GMC oxidoreductase family. In terms of assembly, homodimer. FAD is required as a cofactor.

It is found in the secreted. The protein resides in the cell wall. It localises to the cytoplasmic vesicle. It catalyses the reaction beta-D-glucose + O2 = D-glucono-1,5-lactone + H2O2. Its function is as follows. Glucose oxidase catalyzes the oxidation of beta-D-glucose to D-glucono-delta-lactone and hydrogen peroxide in the presence of molecular oxygen. D-glucono-delta-lactone is sequentially hydrolyzed by lactonase to D-gluconic acid, and the resulting hydrogen peroxide is hydrolyzed by catalase to oxygen and water. Glucose oxidase alone indirectly causes toxicity in the presence of glucose and is the active compound of the antifungal antibiotic talaron. Responsible for inhibition of germination of microsclerotia of Verticillium dahliae. The protein is Glucose oxidase of Talaromyces flavus.